Consider the following 451-residue polypeptide: tRNA-2-methylthio-N(6)-dimethylallyladenosine synthase (451 aa).

Positions 5–121 (RQYHITTFGC…LQDLLEQVEG (117 aa)) constitute an MTTase N-terminal domain. 6 residues coordinate [4Fe-4S] cluster: C14, C50, C84, C156, C160, and C163. The Radical SAM core domain occupies 142–379 (RDSTVTAWVN…NHLVAQKAAE (238 aa)). Residues 382–446 (QRYAGRIEEV…AFSLTGEAVE (65 aa)) form the TRAM domain.

Belongs to the methylthiotransferase family. MiaB subfamily. Monomer. It depends on [4Fe-4S] cluster as a cofactor.

It localises to the cytoplasm. The enzyme catalyses N(6)-dimethylallyladenosine(37) in tRNA + (sulfur carrier)-SH + AH2 + 2 S-adenosyl-L-methionine = 2-methylsulfanyl-N(6)-dimethylallyladenosine(37) in tRNA + (sulfur carrier)-H + 5'-deoxyadenosine + L-methionine + A + S-adenosyl-L-homocysteine + 2 H(+). Its function is as follows. Catalyzes the methylthiolation of N6-(dimethylallyl)adenosine (i(6)A), leading to the formation of 2-methylthio-N6-(dimethylallyl)adenosine (ms(2)i(6)A) at position 37 in tRNAs that read codons beginning with uridine. The sequence is that of tRNA-2-methylthio-N(6)-dimethylallyladenosine synthase from Picosynechococcus sp. (strain ATCC 27264 / PCC 7002 / PR-6) (Agmenellum quadruplicatum).